We begin with the raw amino-acid sequence, 168 residues long: Probable chemoreceptor glutamine deamidase CheD (168 aa).

The protein belongs to the CheD family.

The catalysed reaction is L-glutaminyl-[protein] + H2O = L-glutamyl-[protein] + NH4(+). In terms of biological role, probably deamidates glutamine residues to glutamate on methyl-accepting chemotaxis receptors (MCPs), playing an important role in chemotaxis. In Pseudomonas syringae pv. tomato (strain ATCC BAA-871 / DC3000), this protein is Probable chemoreceptor glutamine deamidase CheD.